A 282-amino-acid chain; its full sequence is Bicarbonate transport ATP-binding protein CmpD (282 aa).

The 234-residue stretch at 24–257 (LTIENVSKVY…RPRDRDRIME (234 aa)) folds into the ABC transporter domain. ATP is bound at residue 60–67 (GHSGCGKS).

Belongs to the ABC transporter superfamily. Nitrate/nitrite/cyanate uptake transporter (NitT) (TC 3.A.1.16) family. As to quaternary structure, the complex is composed of two ATP-binding proteins (CmpC and CmpD), a transmembrane protein (CmpB) and a solute-binding protein (CmpA).

The protein resides in the cell inner membrane. Part of the ABC transporter complex CmpABCD involved in bicarbonate transport. Responsible for energy coupling to the transport system. The chain is Bicarbonate transport ATP-binding protein CmpD (cmpD) from Synechocystis sp. (strain ATCC 27184 / PCC 6803 / Kazusa).